The primary structure comprises 207 residues: Phosphoribosylglycinamide formyltransferase (207 aa).

13–15 serves as a coordination point for N(1)-(5-phospho-beta-D-ribosyl)glycinamide; that stretch reads GSN. (6R)-10-formyltetrahydrofolate is bound by residues 100–103 and N120; that span reads MHIL. The active-site Proton donor is the H122. D162 lines the (6R)-10-formyltetrahydrofolate pocket. Residue E191 coordinates N(1)-(5-phospho-beta-D-ribosyl)glycinamide.

This sequence belongs to the GART family.

It carries out the reaction N(1)-(5-phospho-beta-D-ribosyl)glycinamide + (6R)-10-formyltetrahydrofolate = N(2)-formyl-N(1)-(5-phospho-beta-D-ribosyl)glycinamide + (6S)-5,6,7,8-tetrahydrofolate + H(+). It functions in the pathway purine metabolism; IMP biosynthesis via de novo pathway; N(2)-formyl-N(1)-(5-phospho-D-ribosyl)glycinamide from N(1)-(5-phospho-D-ribosyl)glycinamide (10-formyl THF route): step 1/1. The chain is Phosphoribosylglycinamide formyltransferase (ade5) from Schizosaccharomyces pombe (strain 972 / ATCC 24843) (Fission yeast).